The chain runs to 88 residues: MAKEKFNLQDRFLNILRTKKIEVKVYLVNGFQTKGIVRSFDNFTVLIESGKQQTLIYKHAISTILPAEYIMLMKTEEEQQEQQEAEQE.

Residues 10–70 form the Sm domain; it reads DRFLNILRTK…ISTILPAEYI (61 aa).

Belongs to the Hfq family. As to quaternary structure, homohexamer.

Functionally, RNA chaperone that binds small regulatory RNA (sRNAs) and mRNAs to facilitate mRNA translational regulation in response to envelope stress, environmental stress and changes in metabolite concentrations. Also binds with high specificity to tRNAs. The chain is RNA-binding protein Hfq from Fervidobacterium nodosum (strain ATCC 35602 / DSM 5306 / Rt17-B1).